Here is a 204-residue protein sequence, read N- to C-terminus: Protein GrpE (204 aa).

Positions 1-42 (MTDETAKNGPDAAADAQIEPQVQEETNSTAEDAGQDNNPTAA) are disordered. The segment covering 23–41 (QEETNSTAEDAGQDNNPTA) has biased composition (polar residues).

The protein belongs to the GrpE family. As to quaternary structure, homodimer.

Its subcellular location is the cytoplasm. Functionally, participates actively in the response to hyperosmotic and heat shock by preventing the aggregation of stress-denatured proteins, in association with DnaK and GrpE. It is the nucleotide exchange factor for DnaK and may function as a thermosensor. Unfolded proteins bind initially to DnaJ; upon interaction with the DnaJ-bound protein, DnaK hydrolyzes its bound ATP, resulting in the formation of a stable complex. GrpE releases ADP from DnaK; ATP binding to DnaK triggers the release of the substrate protein, thus completing the reaction cycle. Several rounds of ATP-dependent interactions between DnaJ, DnaK and GrpE are required for fully efficient folding. The chain is Protein GrpE from Allorhizobium ampelinum (strain ATCC BAA-846 / DSM 112012 / S4) (Agrobacterium vitis (strain S4)).